The following is a 200-amino-acid chain: Probable E3 ubiquitin-protein ligase ATL45 (200 aa).

The chain crosses the membrane as a helical span at residues 26–46 (MVVILSALLCALVCVAGLAAV). The RING-type; atypical zinc finger occupies 113–155 (CAICITEFSEGEEIRILPLCSHAFHVACIDKWLTSRSSCPSCR).

This sequence belongs to the RING-type zinc finger family. ATL subfamily. As to quaternary structure, interacts with BIK1.

The protein localises to the membrane. The catalysed reaction is S-ubiquitinyl-[E2 ubiquitin-conjugating enzyme]-L-cysteine + [acceptor protein]-L-lysine = [E2 ubiquitin-conjugating enzyme]-L-cysteine + N(6)-ubiquitinyl-[acceptor protein]-L-lysine.. Its pathway is protein modification; protein ubiquitination. Functionally, E3 ubiquitin-protein ligase that possess E3 ubiquitin ligase activity in vitro and mediates protein monoubiquitination. Triggers the monoubiquitination of phosphorylated BIK1 in response to pathogen-associated molecular pattern (PAMP) detection. May be involved in the early steps of the plant defense signaling pathway. The chain is Probable E3 ubiquitin-protein ligase ATL45 from Arabidopsis thaliana (Mouse-ear cress).